The sequence spans 242 residues: Small ribosomal subunit protein uS2 (242 aa).

It belongs to the universal ribosomal protein uS2 family.

This Vibrio campbellii (strain ATCC BAA-1116) protein is Small ribosomal subunit protein uS2.